The primary structure comprises 87 residues: Large ribosomal subunit protein eL33 (87 aa).

It belongs to the eukaryotic ribosomal protein eL33 family.

The sequence is that of Large ribosomal subunit protein eL33 from Pyrococcus woesei.